The chain runs to 442 residues: MLAFFVTMIFIFWRPKGLNEAIPATFGALMVLLCGSVSLADLGEIGTKVTGASVTILATMIMAIALESFGFFYWVAAKLLQQSKGSGIKLFWLTNLLCFLMTIFLNNDGSILITTPILLLVLKYLGLKKHQKAPYLLSGVLIATASSAPIGVSNIVNLISLKIIGMDLYLHTAMMFVPSMMGLIFMTCLLFMFFYKRLPKSLPDIPGHFQSLRHRRYHPLHSPSAPLPERNQTKIMLFVLAFVFLVRMSLFAASYTGISVPLVAVIGSFILLSWRWIYFKTSPRDLLYKSPWHIFIFAFTMYVLIYGLHNIGFTELLVSYFEPVVSGSLAHATFASGISTSVFSNLFNNHPALMISTFTLTEMTLNPSTTKIIYLANIIGSDIGSLLLPMGTLATLIWMHILKQHDESISWGEYIKTTIIIIPLTVLFTLTCLYFWISWLFL.

The next 11 helical transmembrane spans lie at 22 to 42 (IPAT…LADL), 56 to 76 (ILAT…YWVA), 85 to 105 (GSGI…TIFL), 107 to 127 (NDGS…YLGL), 136 to 156 (LLSG…SNIV), 174 to 194 (MMFV…FMFF), 250 to 270 (LFAA…GSFI), 294 to 314 (IFIF…IGFT), 328 to 347 (SLAH…SNLF), 378 to 398 (IIGS…TLIW), and 419 to 439 (IIII…WISW).

The protein belongs to the ArsB family.

The protein localises to the cell membrane. The polypeptide is Putative arsenical pump membrane protein (ywrK) (Bacillus subtilis (strain 168)).